The chain runs to 143 residues: Actinoxanthin (143 aa).

Residues 1–33 (MSLRHMSRRASRFGVVAVASIGLAAAAQSVAFA) form the signal peptide. 2 disulfides stabilise this stretch: cysteine 69-cysteine 78 and cysteine 119-cysteine 124.

This sequence belongs to the neocarzinostatin family.

Its function is as follows. Binds non-covalently to a chromophore which is the cytotoxic and mutagenic component of the antibiotic. The chromophore binds to DNA as a weak intercalator and causes single- and double-strand breaks. This chain is Actinoxanthin (axnA), found in Streptomyces globisporus.